The sequence spans 719 residues: Polyribonucleotide nucleotidyltransferase (719 aa).

Mg(2+)-binding residues include Asp507 and Asp513. The KH domain maps to 573 to 633 (PKLELFSVDP…EQIKAAKDYI (61 aa)). The S1 motif domain occupies 658-719 (GQEFQGIVKK…NGKISVDLCE (62 aa)).

This sequence belongs to the polyribonucleotide nucleotidyltransferase family. It depends on Mg(2+) as a cofactor.

It is found in the cytoplasm. It carries out the reaction RNA(n+1) + phosphate = RNA(n) + a ribonucleoside 5'-diphosphate. Its function is as follows. Involved in mRNA degradation. Catalyzes the phosphorolysis of single-stranded polyribonucleotides processively in the 3'- to 5'-direction. This is Polyribonucleotide nucleotidyltransferase from Campylobacter jejuni subsp. jejuni serotype O:2 (strain ATCC 700819 / NCTC 11168).